The primary structure comprises 305 residues: UDP-3-O-acyl-N-acetylglucosamine deacetylase (305 aa).

Positions 79, 238, and 242 each coordinate Zn(2+). The active-site Proton donor is the His265.

The protein belongs to the LpxC family. The cofactor is Zn(2+).

The enzyme catalyses a UDP-3-O-[(3R)-3-hydroxyacyl]-N-acetyl-alpha-D-glucosamine + H2O = a UDP-3-O-[(3R)-3-hydroxyacyl]-alpha-D-glucosamine + acetate. It participates in glycolipid biosynthesis; lipid IV(A) biosynthesis; lipid IV(A) from (3R)-3-hydroxytetradecanoyl-[acyl-carrier-protein] and UDP-N-acetyl-alpha-D-glucosamine: step 2/6. Its function is as follows. Catalyzes the hydrolysis of UDP-3-O-myristoyl-N-acetylglucosamine to form UDP-3-O-myristoylglucosamine and acetate, the committed step in lipid A biosynthesis. In Salmonella typhi, this protein is UDP-3-O-acyl-N-acetylglucosamine deacetylase.